Reading from the N-terminus, the 32-residue chain is Islet amyloid polypeptide (32 aa).

Belongs to the calcitonin family. Can form homodimers. Interacts with IDE and INS. Interaction with INS inhibits homodimerization and fibril formation.

It localises to the secreted. Functionally, amylin/IAPP is a glucoregulatory peptide hormone that plays an important role in the regulation of energy homeostasis. Selectively inhibits insulin-stimulated glucose utilization and glycogen deposition in muscle, while not affecting adipocyte glucose metabolism. IAPP function is mediated by the CALCR-RAMPs (AMYRs) receptor complexes. Amylin can also bind CALCR receptor in the absence of RAMPs, although it is more selective for AMYRs. This is Islet amyloid polypeptide (IAPP) from Ovis aries (Sheep).